The chain runs to 682 residues: Probable xyloglucan glycosyltransferase 6 (682 aa).

Helical transmembrane passes span 109–129 (LIKGFLVVVVLLLCFELAAYF) and 173–193 (IVLFLIQSVDRLVLVLGCFWI). The active site involves D260. Substrate contacts are provided by D319 and D321. The active site involves D413. Transmembrane regions (helical) follow at residues 491–511 (LILPFYSFTLFCVILPLTMFF) and 516–536 (LPSWVVCYIPGIMSILNIIPA). S608 is modified (phosphoserine). 2 consecutive transmembrane segments (helical) span residues 632 to 651 (LYRTEIALAFILLAASVRSL) and 657 to 677 (IHFYFLLFQGITFVIVGLDLI).

The protein belongs to the glycosyltransferase 2 family. Plant cellulose synthase-like C subfamily. In terms of assembly, homodimer. Mainly expressed in flowers and seeds, and, to a lower extent, in seedlings, roots, leaves and stems.

The protein localises to the golgi apparatus membrane. In terms of biological role, probable beta-1,4-glucan synthase rather involved in the synthesis of the xyloglucan backbone than cellulose. Seems to work simultaneously with xyloglucan 6-xylosyltransferase. Xyloglucan is a noncellulosic polysaccharides of plant cell wall and consists of a glucan backbone substituted by xylose, galactose and fucose. The chain is Probable xyloglucan glycosyltransferase 6 from Arabidopsis thaliana (Mouse-ear cress).